The primary structure comprises 577 residues: 2-succinyl-5-enolpyruvyl-6-hydroxy-3-cyclohexene-1-carboxylate synthase (577 aa).

It belongs to the TPP enzyme family. MenD subfamily. In terms of assembly, homodimer. Mg(2+) is required as a cofactor. The cofactor is Mn(2+). It depends on thiamine diphosphate as a cofactor.

The enzyme catalyses isochorismate + 2-oxoglutarate + H(+) = 5-enolpyruvoyl-6-hydroxy-2-succinyl-cyclohex-3-ene-1-carboxylate + CO2. The protein operates within quinol/quinone metabolism; 1,4-dihydroxy-2-naphthoate biosynthesis; 1,4-dihydroxy-2-naphthoate from chorismate: step 2/7. It functions in the pathway quinol/quinone metabolism; menaquinone biosynthesis. Its function is as follows. Catalyzes the thiamine diphosphate-dependent decarboxylation of 2-oxoglutarate and the subsequent addition of the resulting succinic semialdehyde-thiamine pyrophosphate anion to isochorismate to yield 2-succinyl-5-enolpyruvyl-6-hydroxy-3-cyclohexene-1-carboxylate (SEPHCHC). The polypeptide is 2-succinyl-5-enolpyruvyl-6-hydroxy-3-cyclohexene-1-carboxylate synthase (Christiangramia forsetii (strain DSM 17595 / CGMCC 1.15422 / KT0803) (Gramella forsetii)).